Reading from the N-terminus, the 176-residue chain is CDP-archaeol synthase (176 aa).

4 helical membrane passes run 41–61 (GLIG…FLYN), 73–93 (IITV…KSYF), 114–134 (VVGS…LNWF), and 138–158 (FDSV…SPLL).

Belongs to the CDP-archaeol synthase family. Mg(2+) is required as a cofactor.

Its subcellular location is the cell membrane. It catalyses the reaction 2,3-bis-O-(geranylgeranyl)-sn-glycerol 1-phosphate + CTP + H(+) = CDP-2,3-bis-O-(geranylgeranyl)-sn-glycerol + diphosphate. It functions in the pathway membrane lipid metabolism; glycerophospholipid metabolism. In terms of biological role, catalyzes the formation of CDP-2,3-bis-(O-geranylgeranyl)-sn-glycerol (CDP-archaeol) from 2,3-bis-(O-geranylgeranyl)-sn-glycerol 1-phosphate (DGGGP) and CTP. This reaction is the third ether-bond-formation step in the biosynthesis of archaeal membrane lipids. This Methanocorpusculum labreanum (strain ATCC 43576 / DSM 4855 / Z) protein is CDP-archaeol synthase.